We begin with the raw amino-acid sequence, 225 residues long: Adenylate kinase (225 aa).

10-15 (GSGKGT) is an ATP binding site. The interval 30 to 59 (ESGAIFRENISKGTEIGKKAKEYIDRGDLV) is NMP. AMP contacts are provided by residues S31, R36, 57–59 (DLV), 85–88 (GFPR), and Q92. Residues 126–165 (GRRLCENDNNHPNNIFIDAIKPDGDKCRVCGGALSARSDD) are LID. R127 is an ATP binding site. The AMP site is built by R162 and R174. Residue P211 participates in ATP binding.

It belongs to the adenylate kinase family. Monomer.

The protein resides in the cytoplasm. It catalyses the reaction AMP + ATP = 2 ADP. It participates in purine metabolism; AMP biosynthesis via salvage pathway; AMP from ADP: step 1/1. Functionally, catalyzes the reversible transfer of the terminal phosphate group between ATP and AMP. Plays an important role in cellular energy homeostasis and in adenine nucleotide metabolism. The sequence is that of Adenylate kinase from Desulfatibacillum aliphaticivorans.